Reading from the N-terminus, the 183-residue chain is RNA 2',3'-cyclic phosphodiesterase (183 aa).

H44 functions as the Proton donor in the catalytic mechanism. Short sequence motifs (HXTX) lie at residues 44–47 and 130–133; these read HITL and HMTL. The Proton acceptor role is filled by H130.

It belongs to the 2H phosphoesterase superfamily. ThpR family.

It catalyses the reaction a 3'-end 2',3'-cyclophospho-ribonucleotide-RNA + H2O = a 3'-end 2'-phospho-ribonucleotide-RNA + H(+). Functionally, hydrolyzes RNA 2',3'-cyclic phosphodiester to an RNA 2'-phosphomonoester. This is RNA 2',3'-cyclic phosphodiesterase (ytlP) from Bacillus subtilis (strain 168).